Here is a 195-residue protein sequence, read N- to C-terminus: MSNIKLIVGLANPGAEYAQTRHNAGAWYVQELARICNVPLVAESKYFGVTARATLHGRDVRLLIPTTYMNLSGKSVAALANFFRILPEEILVAHDELDMDPGVAKFKLGGGHGGHNGLKDIIASLGNDKNFHRLRIGIGHPGDKNKVSGYVLGRAPAVEQERINAAIDEAVRSTEILFNQDMAKAMHRLHSFKAE.

A tRNA-binding site is contributed by Tyr-17. Residue His-22 is the Proton acceptor of the active site. The tRNA site is built by Tyr-68, Asn-70, and Asn-116.

This sequence belongs to the PTH family. Monomer.

It localises to the cytoplasm. It carries out the reaction an N-acyl-L-alpha-aminoacyl-tRNA + H2O = an N-acyl-L-amino acid + a tRNA + H(+). Its function is as follows. Hydrolyzes ribosome-free peptidyl-tRNAs (with 1 or more amino acids incorporated), which drop off the ribosome during protein synthesis, or as a result of ribosome stalling. Catalyzes the release of premature peptidyl moieties from peptidyl-tRNA molecules trapped in stalled 50S ribosomal subunits, and thus maintains levels of free tRNAs and 50S ribosomes. This chain is Peptidyl-tRNA hydrolase, found in Shewanella frigidimarina (strain NCIMB 400).